Here is a 23-residue protein sequence, read N- to C-terminus: Paralytic peptide 2 (23 aa).

C7 and C19 are oxidised to a cystine.

It belongs to the GBP/PSP1/paralytic peptide family. As to expression, hemolymph.

In terms of biological role, causes rapid, rigid paralysis when injected into Lepidopteran larvae. The physiological role may be to reduce hemolymph loss following injury and promote wound healing. The chain is Paralytic peptide 2 from Manduca sexta (Tobacco hawkmoth).